We begin with the raw amino-acid sequence, 292 residues long: Ribosomal protein L11 methyltransferase (292 aa).

S-adenosyl-L-methionine contacts are provided by Thr144, Gly165, Asp187, and Asn229.

This sequence belongs to the methyltransferase superfamily. PrmA family.

Its subcellular location is the cytoplasm. The catalysed reaction is L-lysyl-[protein] + 3 S-adenosyl-L-methionine = N(6),N(6),N(6)-trimethyl-L-lysyl-[protein] + 3 S-adenosyl-L-homocysteine + 3 H(+). Its function is as follows. Methylates ribosomal protein L11. This Pseudomonas savastanoi pv. phaseolicola (strain 1448A / Race 6) (Pseudomonas syringae pv. phaseolicola (strain 1448A / Race 6)) protein is Ribosomal protein L11 methyltransferase.